The chain runs to 299 residues: Craniofacial development protein 1 (299 aa).

Composition is skewed to acidic residues over residues 1 to 18 and 25 to 43; these read MEEF…DEDY and YSED…DGEE. Disordered regions lie at residues 1–156 and 192–224; these read MEEF…ELEK and FFKQ…SSGM. A compositionally biased stretch (basic residues) spans 49 to 65; it reads QGKKRKAQSIPARKRRQ. Residues 70 to 94 show a composition bias toward acidic residues; sequence LEEEEEEDANSESEGSSSEEEDDAA. Residues serine 82, serine 85, and serine 86 each carry the phosphoserine modification. Residues 95–112 are compositionally biased toward basic and acidic residues; the sequence is EQEKGIGSEDARKKKEDE. Residue serine 116 is modified to Phosphoserine. Lysine 150 participates in a covalent cross-link: Glycyl lysine isopeptide (Lys-Gly) (interchain with G-Cter in SUMO2). The tract at residues 178–217 is hydrophilic; sequence VTKEVDATSKEAKSFFKQNEKEKPQANVPSALPSLPAGSG. The segment covering 192-201 has biased composition (basic and acidic residues); sequence FFKQNEKEKP. Residue serine 216 is modified to Phosphoserine. In terms of domain architecture, BCNT-C spans 218–299; it reads LKRSSGMSSL…RDLRLSKMKP (82 aa). Lysine 219 is modified (N6-methyllysine). Position 250 is a phosphoserine (serine 250).

Post-translationally, phosphorylated by CK2 (casein kinase II) in vitro. As to expression, ubiquitous.

The protein resides in the chromosome. The protein localises to the centromere. It is found in the kinetochore. May play a role during embryogenesis. In Homo sapiens (Human), this protein is Craniofacial development protein 1 (CFDP1).